A 154-amino-acid polypeptide reads, in one-letter code: Ribonuclease 1 (154 aa).

This sequence belongs to the BetVI family.

The protein resides in the cytoplasm. Its function is as follows. Catalyzes the two-stage endonucleolytic cleavage to 3'-phosphomononucleotides and 3'-phosphooligonucleotides with 2',3'-cyclic phosphate intermediates. The chain is Ribonuclease 1 from Panax ginseng (Korean ginseng).